Here is a 416-residue protein sequence, read N- to C-terminus: MHKRRRLLAFATVGAVICTAGFTPSVSQAASSGDGEEKGSYAETHGLTADDVESINALNERALTLGQPGKPPKELPPSASAPSRAPSDDRETPPAEPLDRMPEAYRAYGGRATTVVNNYIRKWQQVYSHRDGKKQQMTEEQREKLSYGCVGVTWVNSGPYPTNRLAFASFDENKYKNDLKNTSPRPDETRAEFEGRIAKGSFDEGKGFKRARDVASVMNKALENAHDEGTYINNLKTELTNNNDALLREDSRSNFYSALRNTPSFKERDGGNYDPSKMKAVIYSKHFWSGQDQRGSSDKRKYGDPEAFRPDQGTGLVDMSKDRSIPRSPAKPGEGWVNFDYGWFGAQTEADADKTTWTHGDHYHAPNSDLGPMHVHESKFRKWSAGYADFDRGAYVITFIPKSWNTAPAKVEQGWP.

Residues 1–29 (MHKRRRLLAFATVGAVICTAGFTPSVSQA) constitute a signal peptide (tat-type signal). The propeptide occupies 30-85 (ASSGDGEEKGSYAETHGLTADDVESINALNERALTLGQPGKPPKELPPSASAPSRA). A disordered region spans residues 64–103 (TLGQPGKPPKELPPSASAPSRAPSDDRETPPAEPLDRMPE). Residues 76 to 85 (PPSASAPSRA) show a composition bias toward low complexity. Over residues 86 to 103 (PSDDRETPPAEPLDRMPE) the composition is skewed to basic and acidic residues. C149 is an active-site residue. The segment at 290-331 (GQDQRGSSDKRKYGDPEAFRPDQGTGLVDMSKDRSIPRSPAK) is disordered. A compositionally biased stretch (basic and acidic residues) spans 295-309 (GSSDKRKYGDPEAFR). Active-site residues include D340 and H359.

This sequence belongs to the bacterial TGase family. Predicted to be exported by the Tat system. The position of the signal peptide cleavage has not been experimentally proven.

The catalysed reaction is L-glutaminyl-[protein] + L-lysyl-[protein] = [protein]-L-lysyl-N(6)-5-L-glutamyl-[protein] + NH4(+). Functionally, catalyzes the cross-linking of proteins and the conjugation of polyamines to proteins. This chain is Protein-glutamine gamma-glutamyltransferase, found in Streptomyces cinnamoneus (Streptoverticillium cinnamoneum).